Here is a 97-residue protein sequence, read N- to C-terminus: Protein RnfH (97 aa).

It belongs to the UPF0125 (RnfH) family.

The sequence is that of Protein RnfH from Proteus mirabilis (strain HI4320).